The following is a 476-amino-acid chain: Aspartyl/glutamyl-tRNA(Asn/Gln) amidotransferase subunit B 1 (476 aa).

Belongs to the GatB/GatE family. GatB subfamily. In terms of assembly, heterotrimer of A, B and C subunits.

It catalyses the reaction L-glutamyl-tRNA(Gln) + L-glutamine + ATP + H2O = L-glutaminyl-tRNA(Gln) + L-glutamate + ADP + phosphate + H(+). The catalysed reaction is L-aspartyl-tRNA(Asn) + L-glutamine + ATP + H2O = L-asparaginyl-tRNA(Asn) + L-glutamate + ADP + phosphate + 2 H(+). In terms of biological role, allows the formation of correctly charged Asn-tRNA(Asn) or Gln-tRNA(Gln) through the transamidation of misacylated Asp-tRNA(Asn) or Glu-tRNA(Gln) in organisms which lack either or both of asparaginyl-tRNA or glutaminyl-tRNA synthetases. The reaction takes place in the presence of glutamine and ATP through an activated phospho-Asp-tRNA(Asn) or phospho-Glu-tRNA(Gln). The protein is Aspartyl/glutamyl-tRNA(Asn/Gln) amidotransferase subunit B 1 (gatB1) of Clostridium acetobutylicum (strain ATCC 824 / DSM 792 / JCM 1419 / IAM 19013 / LMG 5710 / NBRC 13948 / NRRL B-527 / VKM B-1787 / 2291 / W).